Here is a 142-residue protein sequence, read N- to C-terminus: Hemoglobin subunit alpha-A (142 aa).

The Globin domain maps to 2–142 (VLSAADKTNV…VGAVLTAKYR (141 aa)). Histidine 59 lines the O2 pocket. Residue histidine 88 participates in heme b binding.

This sequence belongs to the globin family. Heterotetramer of two alpha chains and two beta chains. As to expression, red blood cells.

Involved in oxygen transport from the lung to the various peripheral tissues. The chain is Hemoglobin subunit alpha-A (HBAA) from Cairina moschata (Muscovy duck).